Consider the following 472-residue polypeptide: Tyrosine--tRNA ligase, mitochondrial (472 aa).

L-tyrosine is bound at residue tyrosine 72. Residue aspartate 76 participates in ATP binding. A 'HIGH' region motif is present at residues 77 to 86 (PTGDSLHVGH). 5 residues coordinate L-tyrosine: aspartate 116, tyrosine 216, glutamine 220, aspartate 223, and glutamine 242. ATP contacts are provided by isoleucine 269 and lysine 279. The short motif at 276 to 280 (KLGKS) is the 'KMSKS' region element. N6-acetyllysine occurs at positions 350 and 362.

It belongs to the class-I aminoacyl-tRNA synthetase family. In terms of assembly, homodimer.

The protein localises to the mitochondrion matrix. It catalyses the reaction tRNA(Tyr) + L-tyrosine + ATP = L-tyrosyl-tRNA(Tyr) + AMP + diphosphate + H(+). Functionally, catalyzes the attachment of tyrosine to tRNA(Tyr) in a two-step reaction: tyrosine is first activated by ATP to form Tyr-AMP and then transferred to the acceptor end of tRNA(Tyr). The polypeptide is Tyrosine--tRNA ligase, mitochondrial (Yars2) (Mus musculus (Mouse)).